The chain runs to 182 residues: NAD(P)H-quinone oxidoreductase subunit J (182 aa).

It belongs to the complex I 30 kDa subunit family. As to quaternary structure, NDH-1 can be composed of about 15 different subunits; different subcomplexes with different compositions have been identified which probably have different functions.

It is found in the cellular thylakoid membrane. It catalyses the reaction a plastoquinone + NADH + (n+1) H(+)(in) = a plastoquinol + NAD(+) + n H(+)(out). It carries out the reaction a plastoquinone + NADPH + (n+1) H(+)(in) = a plastoquinol + NADP(+) + n H(+)(out). Functionally, NDH-1 shuttles electrons from an unknown electron donor, via FMN and iron-sulfur (Fe-S) centers, to quinones in the respiratory and/or the photosynthetic chain. The immediate electron acceptor for the enzyme in this species is believed to be plastoquinone. Couples the redox reaction to proton translocation, and thus conserves the redox energy in a proton gradient. Cyanobacterial NDH-1 also plays a role in inorganic carbon-concentration. The protein is NAD(P)H-quinone oxidoreductase subunit J of Synechococcus sp. (strain WH7803).